Consider the following 132-residue polypeptide: Small ribosomal subunit protein uS8 (132 aa).

This sequence belongs to the universal ribosomal protein uS8 family. In terms of assembly, part of the 30S ribosomal subunit. Contacts proteins S5 and S12.

Its function is as follows. One of the primary rRNA binding proteins, it binds directly to 16S rRNA central domain where it helps coordinate assembly of the platform of the 30S subunit. The protein is Small ribosomal subunit protein uS8 of Brucella abortus (strain S19).